An 845-amino-acid polypeptide reads, in one-letter code: Leucine--tRNA ligase (845 aa).

The 'HIGH' region motif lies at 40–51; that stretch reads PYPSGAGLHVGH. The 'KMSKS' region motif lies at 623–627; it reads KMSKS. Lys626 provides a ligand contact to ATP.

It belongs to the class-I aminoacyl-tRNA synthetase family.

It localises to the cytoplasm. It catalyses the reaction tRNA(Leu) + L-leucine + ATP = L-leucyl-tRNA(Leu) + AMP + diphosphate. This Protochlamydia amoebophila (strain UWE25) protein is Leucine--tRNA ligase.